Consider the following 724-residue polypeptide: MSSAKKKPSLVTCPQCNAVVLTKDSLRHQDFCGKPVVESEIACAQNGTLRGFNVAVDKAEGFLPPDAVGWEKEHSILINQQTMESLGLLARQPVRIIHSSDSFIGIVWPCKEVALLKVSIISSRIARERMITLESCGRVEKLKSLSVTVKTSLTLNPALSGFLEAYLSHSYLQYNSSVDLKYLGQNVTVTPEEPIESKMSAMGIDDDKKRNSKVVSTAVGYKIQILNASAEGSTSDVLQTLPTDLSNIGGCFTAKQVLEDYVISPVRQKESPCSVLIWGLPGSGKTLLLKEVALVLSGSTTYIGSCEELMELNGVTTGNIVIVDVNELEKENTKANRALSFLLGDEKKCVILCVRSSETLDIGFRVRFPIEAEITVPTQDERLDILSKIGNIYNFPLELHLDVARHTHGFTGGDLCSLLKAAKFARGRTHLERVNDARKRIRPTGIRQFILEVPNVSWNDIGGNEELKLEIQQAVIWPQKHPEAFERFGIDPPAGILLYGPPGCSKTLIARALASEAKMNFLAVKGPELFSKWVGDSEKAIRDLFSRARQVAPTIVFFDEIDAVGSSRGSEKSSGVSDRVLAQLLTELDGLEKSSRVILLAATNRPDQLDSALLRPGRLDRAIYVGLPCEVTRRAILEMRTKKMKFDDTVRTIDKLVEKTSGYSGAELVAVCRTAAMFAMRESIDATIVQWTHFEQALAAVVSRTEAYLLEIYDDFKAGRASNA.

Residues 281–287 (PGSGKTL) and 503–508 (GCSKTL) contribute to the ATP site.

The protein belongs to the AAA ATPase family. AFG2 subfamily. As to quaternary structure, homohexamer; ATP binding induces oligomerization. Forms a ring-shaped particle of about 12 nm diameter, that displays 6-fold radial symmetry. Interacts (via N-terminus) with kinase air-2; the interaction is direct and inhibits air-2 kinase activity in an ATPase-dependent manner.

Its subcellular location is the cytoplasm. The enzyme catalyses ATP + H2O = ADP + phosphate + H(+). ATP-dependent chaperone which uses the energy provided by ATP hydrolysis to generate mechanical force to disassemble protein complexes. Required for various steps of embryonic mitosis including centrosome duplication, spindle assembly, ER dynamics and cell cycle progression. Regulates the stability and activity of kinase air-2, a component of the chromosomal passenger complex (CPC). Inhibits air-2 kinase activity from metaphase to late telophase and negatively regulates air-2 stability during mitotic exit. Controls ER transition into sheet-like structures at the onset of mitosis, possibly by regulating homotypic membrane fusion. This chain is ATPase family protein 2 homolog, found in Caenorhabditis elegans.